The chain runs to 426 residues: Serine--tRNA ligase (426 aa).

Threonine 233 to glutamate 235 contacts L-serine. Residue arginine 264–glutamate 266 coordinates ATP. Position 287 (glutamate 287) interacts with L-serine. Residue glutamate 351–serine 354 coordinates ATP. Residue serine 387 participates in L-serine binding.

Belongs to the class-II aminoacyl-tRNA synthetase family. Type-1 seryl-tRNA synthetase subfamily. Homodimer. The tRNA molecule binds across the dimer.

It localises to the cytoplasm. It catalyses the reaction tRNA(Ser) + L-serine + ATP = L-seryl-tRNA(Ser) + AMP + diphosphate + H(+). It carries out the reaction tRNA(Sec) + L-serine + ATP = L-seryl-tRNA(Sec) + AMP + diphosphate + H(+). Its pathway is aminoacyl-tRNA biosynthesis; selenocysteinyl-tRNA(Sec) biosynthesis; L-seryl-tRNA(Sec) from L-serine and tRNA(Sec): step 1/1. Functionally, catalyzes the attachment of serine to tRNA(Ser). Is also able to aminoacylate tRNA(Sec) with serine, to form the misacylated tRNA L-seryl-tRNA(Sec), which will be further converted into selenocysteinyl-tRNA(Sec). The polypeptide is Serine--tRNA ligase (Ectopseudomonas mendocina (strain ymp) (Pseudomonas mendocina)).